We begin with the raw amino-acid sequence, 241 residues long: Large ribosomal subunit protein uL1 (241 aa).

The protein belongs to the universal ribosomal protein uL1 family. Part of the 50S ribosomal subunit.

Its function is as follows. Binds directly to 23S rRNA. The L1 stalk is quite mobile in the ribosome, and is involved in E site tRNA release. Protein L1 is also a translational repressor protein, it controls the translation of the L11 operon by binding to its mRNA. This Thermomicrobium roseum (strain ATCC 27502 / DSM 5159 / P-2) protein is Large ribosomal subunit protein uL1.